Consider the following 274-residue polypeptide: 3-methyl-2-oxobutanoate hydroxymethyltransferase (274 aa).

Positions 50 and 89 each coordinate Mg(2+). Residues 50–51 (DS), aspartate 89, and lysine 119 each bind 3-methyl-2-oxobutanoate. Glutamate 121 contributes to the Mg(2+) binding site. The active-site Proton acceptor is glutamate 188.

This sequence belongs to the PanB family. In terms of assembly, homodecamer; pentamer of dimers. Mg(2+) is required as a cofactor.

It localises to the cytoplasm. The enzyme catalyses 3-methyl-2-oxobutanoate + (6R)-5,10-methylene-5,6,7,8-tetrahydrofolate + H2O = 2-dehydropantoate + (6S)-5,6,7,8-tetrahydrofolate. Its pathway is cofactor biosynthesis; (R)-pantothenate biosynthesis; (R)-pantoate from 3-methyl-2-oxobutanoate: step 1/2. Its function is as follows. Catalyzes the reversible reaction in which hydroxymethyl group from 5,10-methylenetetrahydrofolate is transferred onto alpha-ketoisovalerate to form ketopantoate. The chain is 3-methyl-2-oxobutanoate hydroxymethyltransferase from Methylorubrum populi (strain ATCC BAA-705 / NCIMB 13946 / BJ001) (Methylobacterium populi).